Reading from the N-terminus, the 205-residue chain is uncharacterized protein (205 aa).

Transmembrane regions (helical) follow at residues 18–38 (ATVN…GTIG), 69–89 (LGIF…CFYA), 106–126 (VVWI…YYIM), and 127–147 (LLHP…LFLI).

It is found in the mitochondrion membrane. This is an uncharacterized protein from Arabidopsis thaliana (Mouse-ear cress).